A 178-amino-acid chain; its full sequence is Large ribosomal subunit protein uL6 (178 aa).

It belongs to the universal ribosomal protein uL6 family. In terms of assembly, part of the 50S ribosomal subunit.

In terms of biological role, this protein binds to the 23S rRNA, and is important in its secondary structure. It is located near the subunit interface in the base of the L7/L12 stalk, and near the tRNA binding site of the peptidyltransferase center. This is Large ribosomal subunit protein uL6 from Oenococcus oeni (strain ATCC BAA-331 / PSU-1).